We begin with the raw amino-acid sequence, 240 residues long: tRNA pseudouridine synthase A (240 aa).

The Nucleophile role is filled by D50. Residue Y109 coordinates substrate.

This sequence belongs to the tRNA pseudouridine synthase TruA family. Homodimer.

The enzyme catalyses uridine(38/39/40) in tRNA = pseudouridine(38/39/40) in tRNA. Formation of pseudouridine at positions 38, 39 and 40 in the anticodon stem and loop of transfer RNAs. This Campylobacter jejuni (strain RM1221) protein is tRNA pseudouridine synthase A.